Here is a 433-residue protein sequence, read N- to C-terminus: Gamma-glutamyl phosphate reductase 1 (433 aa).

It belongs to the gamma-glutamyl phosphate reductase family.

Its subcellular location is the cytoplasm. The catalysed reaction is L-glutamate 5-semialdehyde + phosphate + NADP(+) = L-glutamyl 5-phosphate + NADPH + H(+). It functions in the pathway amino-acid biosynthesis; L-proline biosynthesis; L-glutamate 5-semialdehyde from L-glutamate: step 2/2. In terms of biological role, catalyzes the NADPH-dependent reduction of L-glutamate 5-phosphate into L-glutamate 5-semialdehyde and phosphate. The product spontaneously undergoes cyclization to form 1-pyrroline-5-carboxylate. This is Gamma-glutamyl phosphate reductase 1 from Synechocystis sp. (strain ATCC 27184 / PCC 6803 / Kazusa).